The chain runs to 310 residues: GMP synthase [glutamine-hydrolyzing] subunit B (310 aa).

The region spanning 2 to 185 is the GMPS ATP-PPase domain; sequence FKTEPFIEES…LGLPDQIAHR (184 aa). 29 to 35 serves as a coordination point for ATP; it reads SGGVDSS.

As to quaternary structure, heterodimer composed of a glutamine amidotransferase subunit (A) and a GMP-binding subunit (B).

The enzyme catalyses XMP + L-glutamine + ATP + H2O = GMP + L-glutamate + AMP + diphosphate + 2 H(+). The protein operates within purine metabolism; GMP biosynthesis; GMP from XMP (L-Gln route): step 1/1. Catalyzes the synthesis of GMP from XMP. In Methanococcus maripaludis (strain C7 / ATCC BAA-1331), this protein is GMP synthase [glutamine-hydrolyzing] subunit B.